A 294-amino-acid chain; its full sequence is Elongation factor Ts (294 aa).

The interval 82–85 is involved in Mg(2+) ion dislocation from EF-Tu; sequence TDFV.

This sequence belongs to the EF-Ts family.

The protein localises to the cytoplasm. In terms of biological role, associates with the EF-Tu.GDP complex and induces the exchange of GDP to GTP. It remains bound to the aminoacyl-tRNA.EF-Tu.GTP complex up to the GTP hydrolysis stage on the ribosome. The protein is Elongation factor Ts of Nitrosomonas eutropha (strain DSM 101675 / C91 / Nm57).